We begin with the raw amino-acid sequence, 292 residues long: Imipenem-hydrolyzing beta-lactamase (292 aa).

An N-terminal signal peptide occupies residues Met-1–Ala-27. Cys-70 and Cys-240 are disulfide-bonded. The Acyl-ester intermediate role is filled by Ser-71. Residue Lys-236–Gly-238 coordinates substrate.

The protein belongs to the class-A beta-lactamase family.

The enzyme catalyses a beta-lactam + H2O = a substituted beta-amino acid. Hydrolyzes carbapenems such as imipenem, which are extended-spectrum beta-lactam antibiotics. This chain is Imipenem-hydrolyzing beta-lactamase (nmcA), found in Enterobacter cloacae.